The sequence spans 219 residues: MSSDDEGGEEYLFKIVIIGDSAVGKSNLLSRYARNEFNAHSKATIGVEFQTQNMEIEGKEVKAQIWDTAGQERFRAVTSAYYRGAVGALVVYDISRRSTFESVGRWLDELKTHSDTTVARMLVGNKCDLESIRAVSVEEGKALAETEGLFFMETSALDSTNVKTAFEMVIRDIYTNISRKQLNSDTYKTELSMKNRVSLVKDDNKSSTQGFGFSCCSSS.

N-acetylserine is present on serine 2. 19–26 serves as a coordination point for GTP; that stretch reads GDSAVGKS. Residues 41-49 carry the Effector region motif; sequence SKATIGVEF. GTP is bound by residues 67-71, 125-128, and 155-156; these read DTAGQ, NKCD, and SA. Residues cysteine 215 and cysteine 216 are each lipidated (S-geranylgeranyl cysteine).

The protein belongs to the small GTPase superfamily. Rab family.

The protein localises to the cell membrane. Functionally, intracellular vesicle trafficking and protein transport. In Arabidopsis thaliana (Mouse-ear cress), this protein is Ras-related protein RABA5d (RABA5D).